A 43-amino-acid chain; its full sequence is Large ribosomal subunit protein bL32 (43 aa).

Belongs to the bacterial ribosomal protein bL32 family.

The protein is Large ribosomal subunit protein bL32 (rpmF) of Carsonella ruddii (strain PV).